The primary structure comprises 618 residues: Proline--tRNA ligase (618 aa).

It belongs to the class-II aminoacyl-tRNA synthetase family. ProS type 1 subfamily. In terms of assembly, homodimer.

It localises to the cytoplasm. The catalysed reaction is tRNA(Pro) + L-proline + ATP = L-prolyl-tRNA(Pro) + AMP + diphosphate. In terms of biological role, catalyzes the attachment of proline to tRNA(Pro) in a two-step reaction: proline is first activated by ATP to form Pro-AMP and then transferred to the acceptor end of tRNA(Pro). As ProRS can inadvertently accommodate and process non-cognate amino acids such as alanine and cysteine, to avoid such errors it has two additional distinct editing activities against alanine. One activity is designated as 'pretransfer' editing and involves the tRNA(Pro)-independent hydrolysis of activated Ala-AMP. The other activity is designated 'posttransfer' editing and involves deacylation of mischarged Ala-tRNA(Pro). The misacylated Cys-tRNA(Pro) is not edited by ProRS. The protein is Proline--tRNA ligase of Streptococcus equi subsp. equi (strain 4047).